The sequence spans 457 residues: Chromosomal replication initiator protein DnaA (457 aa).

A domain I, interacts with DnaA modulators region spans residues 1–73 (MANNYQTLYD…SKYLSEEFKK (73 aa)). Residues 73 to 108 (KENIVNFEFIIDNEKLLINSNFLIKETNIKNRFNFS) form a domain II region. The domain III, AAA+ region stretch occupies residues 109 to 331 (DELLRYNFNN…GNLKQICFWA (223 aa)). ATP contacts are provided by Gly-156, Gly-158, Lys-159, and Thr-160. A domain IV, binds dsDNA region spans residues 332-457 (DNDTNKDLII…LQINLIINKF (126 aa)).

It belongs to the DnaA family. In terms of assembly, oligomerizes as a right-handed, spiral filament on DNA at oriC.

Its subcellular location is the cytoplasm. Its function is as follows. Plays an essential role in the initiation and regulation of chromosomal replication. ATP-DnaA binds to the origin of replication (oriC) to initiate formation of the DNA replication initiation complex once per cell cycle. Binds the DnaA box (a 9 base pair repeat at the origin) and separates the double-stranded (ds)DNA. Forms a right-handed helical filament on oriC DNA; dsDNA binds to the exterior of the filament while single-stranded (ss)DNA is stabiized in the filament's interior. The ATP-DnaA-oriC complex binds and stabilizes one strand of the AT-rich DNA unwinding element (DUE), permitting loading of DNA polymerase. After initiation quickly degrades to an ADP-DnaA complex that is not apt for DNA replication. Binds acidic phospholipids. This is Chromosomal replication initiator protein DnaA from Ureaplasma parvum serovar 3 (strain ATCC 700970).